We begin with the raw amino-acid sequence, 504 residues long: 26S proteasome non-ATPase regulatory subunit 5 (504 aa).

A2 is subject to N-acetylalanine.

The protein belongs to the proteasome subunit S5B/HSM3 family. Interacts with PSMC1, PSMC2, PSMD1 and PSMD6. Part of transient complex containing PSMD5, PSMC2, PSMC1 and PSMD2 formed during the assembly of the 26S proteasome.

Functionally, acts as a chaperone during the assembly of the 26S proteasome, specifically of the base subcomplex of the PA700/19S regulatory complex (RC). In the initial step of the base subcomplex assembly is part of an intermediate PSMD5:PSMC2:PSMC1:PSMD2 module which probably assembles with a PSMD10:PSMC4:PSMC5:PAAF1 module followed by dissociation of PSMD5. In Mus musculus (Mouse), this protein is 26S proteasome non-ATPase regulatory subunit 5 (Psmd5).